A 296-amino-acid chain; its full sequence is D-alanine--D-alanine ligase (296 aa).

Positions 103–293 (KEILMHYRMP…FDSFVKRIIE (191 aa)) constitute an ATP-grasp domain. 129-180 (ISFPVAVKPSSGGSSIATFKVKSIQELKHAYEEASKYGEVMIEQWVTGKEIT) provides a ligand contact to ATP. Mg(2+) is bound by residues D247, E260, and N262.

It belongs to the D-alanine--D-alanine ligase family. Mg(2+) is required as a cofactor. Mn(2+) serves as cofactor.

Its subcellular location is the cytoplasm. It catalyses the reaction 2 D-alanine + ATP = D-alanyl-D-alanine + ADP + phosphate + H(+). Its pathway is cell wall biogenesis; peptidoglycan biosynthesis. Functionally, cell wall formation. This chain is D-alanine--D-alanine ligase, found in Francisella tularensis subsp. tularensis (strain WY96-3418).